The chain runs to 540 residues: Tyrosine-protein kinase transforming protein erbB (540 aa).

Residues 132–399 form the Protein kinase domain; the sequence is FKKVKVLGFG…KMARDPPRYL (268 aa). Residues 138-146 and Lys165 each bind ATP; that span reads LGFGAFGTV. Asp257 functions as the Proton acceptor in the catalytic mechanism.

This sequence belongs to the protein kinase superfamily. Tyr protein kinase family. EGF receptor subfamily.

The enzyme catalyses L-tyrosyl-[protein] + ATP = O-phospho-L-tyrosyl-[protein] + ADP + H(+). The sequence is that of Tyrosine-protein kinase transforming protein erbB (V-ERBB) from Avian erythroblastosis virus (strain ts167).